A 364-amino-acid polypeptide reads, in one-letter code: Coproporphyrin III ferrochelatase (364 aa).

Residues arginine 29 and tyrosine 118 each contribute to the Fe-coproporphyrin III site. Histidine 169 and glutamate 250 together coordinate Fe(2+).

This sequence belongs to the ferrochelatase family.

It localises to the cytoplasm. The catalysed reaction is Fe-coproporphyrin III + 2 H(+) = coproporphyrin III + Fe(2+). The protein operates within porphyrin-containing compound metabolism; protoheme biosynthesis. In terms of biological role, involved in coproporphyrin-dependent heme b biosynthesis. Catalyzes the insertion of ferrous iron into coproporphyrin III to form Fe-coproporphyrin III. This is Coproporphyrin III ferrochelatase from Streptococcus pneumoniae serotype 4 (strain ATCC BAA-334 / TIGR4).